A 426-amino-acid polypeptide reads, in one-letter code: Serine--tRNA ligase (426 aa).

The segment at K36 to E66 is disordered. Residues D46 to S55 are compositionally biased toward polar residues. Residue T233–E235 participates in L-serine binding. R264–E266 serves as a coordination point for ATP. E287 contacts L-serine. E351–S354 provides a ligand contact to ATP. S387 contributes to the L-serine binding site.

The protein belongs to the class-II aminoacyl-tRNA synthetase family. Type-1 seryl-tRNA synthetase subfamily. As to quaternary structure, homodimer. The tRNA molecule binds across the dimer.

Its subcellular location is the cytoplasm. It catalyses the reaction tRNA(Ser) + L-serine + ATP = L-seryl-tRNA(Ser) + AMP + diphosphate + H(+). It carries out the reaction tRNA(Sec) + L-serine + ATP = L-seryl-tRNA(Sec) + AMP + diphosphate + H(+). It participates in aminoacyl-tRNA biosynthesis; selenocysteinyl-tRNA(Sec) biosynthesis; L-seryl-tRNA(Sec) from L-serine and tRNA(Sec): step 1/1. Functionally, catalyzes the attachment of serine to tRNA(Ser). Is also able to aminoacylate tRNA(Sec) with serine, to form the misacylated tRNA L-seryl-tRNA(Sec), which will be further converted into selenocysteinyl-tRNA(Sec). The protein is Serine--tRNA ligase of Francisella tularensis subsp. tularensis (strain FSC 198).